A 121-amino-acid polypeptide reads, in one-letter code: Ig heavy chain V region MPC 11 (121 aa).

Residues 1-112 form the Ig-like domain; it reads EAQLQQSGAE…NSSPYFDSWG (112 aa).

The polypeptide is Ig heavy chain V region MPC 11 (Mus musculus (Mouse)).